Reading from the N-terminus, the 267-residue chain is Orotidine 5'-phosphate decarboxylase (267 aa).

Residues Asp-37, 59–61 (KTH), 91–100 (DRKFADIGNT), Tyr-217, and Arg-235 each bind substrate. Catalysis depends on Lys-93, which acts as the Proton donor.

It belongs to the OMP decarboxylase family.

It carries out the reaction orotidine 5'-phosphate + H(+) = UMP + CO2. It participates in pyrimidine metabolism; UMP biosynthesis via de novo pathway; UMP from orotate: step 2/2. This Eremothecium gossypii (strain ATCC 10895 / CBS 109.51 / FGSC 9923 / NRRL Y-1056) (Yeast) protein is Orotidine 5'-phosphate decarboxylase (URA3).